Here is an 81-residue protein sequence, read N- to C-terminus: Conotoxin Cl9.6 (81 aa).

The N-terminal stretch at 1-20 is a signal peptide; the sequence is MSTLGMTLLILLLLLPLATP. A propeptide spanning residues 21–40 is cleaved from the precursor; it reads DDVGQPPKRDTLRNLLKIGT. 3 disulfides stabilise this stretch: C46-C69, C54-C76, and C60-C78.

In terms of tissue distribution, expressed by the venom duct.

It is found in the secreted. The polypeptide is Conotoxin Cl9.6 (Californiconus californicus (California cone)).